Here is a 352-residue protein sequence, read N- to C-terminus: Heat-inducible transcription repressor HrcA (352 aa).

The protein belongs to the HrcA family.

Negative regulator of class I heat shock genes (grpE-dnaK-dnaJ and groELS operons). Prevents heat-shock induction of these operons. This is Heat-inducible transcription repressor HrcA from Latilactobacillus sakei (Lactobacillus sakei).